Consider the following 157-residue polypeptide: Probable succinate transporter subunit YjjB (157 aa).

Helical transmembrane passes span 8-28, 50-70, 87-107, and 129-149; these read LALAQDMILAAIPAVGFAMVF, MILMTSGLNIEWSTFMASMLV, VFTVAAVIPMFPGISAYTAMI, and FLTASSIVGALSIGLSIPGLW.

Belongs to the ThrE exporter (TC 2.A.79) family. As to quaternary structure, the transporter is composed of YjjB and YjjP.

It is found in the cell inner membrane. In terms of biological role, involved in succinate export with YjjP. Both proteins are required for export. This Shigella flexneri serotype 5b (strain 8401) protein is Probable succinate transporter subunit YjjB.